Consider the following 227-residue polypeptide: Transmembrane emp24 domain-containing protein 4 (227 aa).

The signal sequence occupies residues 1–29 (MAGVGAGPLRAMGRQALLLLALCATGAQG). The Lumenal portion of the chain corresponds to 30–194 (LYFHIGETEK…RLTSESTNQR (165 aa)). One can recognise a GOLD domain in the interval 39 to 137 (KRCFIEEIPD…KLRVHLDIQV (99 aa)). N117 is a glycosylation site (N-linked (GlcNAc...) asparagine). Residues 147–176 (IAAKDKLTELQLRARQLLDQVEQIQKEQDY) adopt a coiled-coil conformation. A helical membrane pass occupies residues 195 to 212 (VLWWSIAQTVILILTGIW). Over 213–227 (QMRHLKSFFEAKKLV) the chain is Cytoplasmic. The COPII vesicle coat-binding signature appears at 220–221 (FF). A COPI vesicle coat-binding motif is present at residues 220 to 227 (FFEAKKLV).

This sequence belongs to the EMP24/GP25L family.

The protein localises to the endoplasmic reticulum membrane. Involved in vesicular protein trafficking, mainly in the early secretory pathway. targeting. Involved in the maintenance of the Golgi apparatus. Appears to play a role in the biosynthesis of secreted cargo including processing. Involved in endoplasmic reticulum stress response. May play a role in the regulation of heat-shock response and apoptosis. In Homo sapiens (Human), this protein is Transmembrane emp24 domain-containing protein 4 (TMED4).